Consider the following 135-residue polypeptide: Small ribosomal subunit protein bS16 (135 aa).

The segment covering 105–120 (DEKKKPVLKPKTEKAA) has biased composition (basic and acidic residues). The segment at 105-135 (DEKKKPVLKPKTEKAAPEAAAPEAEATEEQA) is disordered.

The protein belongs to the bacterial ribosomal protein bS16 family.

In Clavibacter sepedonicus (Clavibacter michiganensis subsp. sepedonicus), this protein is Small ribosomal subunit protein bS16.